The chain runs to 538 residues: Putative ABC1 protein At2g40090 (538 aa).

An N-terminal signal peptide occupies residues 1–26 (MAARSLWRTRTKLLVVGTALCGGSGA).

Belongs to the protein kinase superfamily. ADCK protein kinase family.

This is Putative ABC1 protein At2g40090 from Arabidopsis thaliana (Mouse-ear cress).